The following is a 244-amino-acid chain: MSVEITFVEQFQEILQNGKEQIILLNFYAPWAAPCKQMNQVFDQFAKDTKNAVFLKIEAEKFSDIAESFDVNAVPLFVLIHGAKVLARISGANPQKLKAAIDEYIQPLISQISSTNASVETQVNSVQTTNTTSNTSKAPNGLDSELNERLSTLTNAHNVMLFLKGTPSEPACGFSRKLVGLLREQNVQYGFFNILADDSVRQGLKVFSDWPTFPQLYIKGEFVGGLDIVSEMIENGELQEMLPN.

Residues 2-106 (SVEITFVEQF…LKAAIDEYIQ (105 aa)) form the Thioredoxin domain. Positions 147–244 (NERLSTLTNA…NGELQEMLPN (98 aa)) constitute a Glutaredoxin domain. K164 is a glutathione binding site. C172 provides a ligand contact to [2Fe-2S] cluster. Glutathione is bound by residues 201–205 (RQGLK) and 226–227 (LD).

Belongs to the glutaredoxin family. Monothiol subfamily. Homodimer. Interacts with php4.

The protein localises to the cytoplasm. It localises to the nucleus. Monothiol glutaredoxin involved in the biogenesis of iron-sulfur clusters. Binds one iron-sulfur cluster per dimer. The iron-sulfur cluster is bound between subunits, and is complexed by a bound glutathione and a cysteine residue from each subunit. The polypeptide is Monothiol glutaredoxin-4 (grx4) (Schizosaccharomyces pombe (strain 972 / ATCC 24843) (Fission yeast)).